The following is a 222-amino-acid chain: Collectrin (222 aa).

The N-terminal stretch at 1-14 (MLWALFFLVTTIHA) is a signal peptide. Topologically, residues 15–141 (ELCHPDAENA…LAPPMEPSVP (127 aa)) are extracellular. The 202-residue stretch at 21–222 (AENAFKVRLS…LTEDERLTPL (202 aa)) folds into the Collectrin-like domain. Asparagine 76 and asparagine 93 each carry an N-linked (GlcNAc...) asparagine glycan. A helical membrane pass occupies residues 142–162 (VWIIVFGVIFCIVTVAIALLV). Over 163–222 (LSGIRQRRRNNKGPPGVEDAEDKCENIITIENGIPCDPLDMKGGHINDGFLTEDERLTPL) the chain is Cytoplasmic. 2 positions are modified to phosphothreonine: threonine 214 and threonine 220.

The protein belongs to the CLTRN family. Monomer. Homodimer. Homodimer; dimerization prevents CLTRN cleavage by BACE2. Interacts with SNAPIN. Interacts with SLC6A18; this interaction regulates the trafficking of SLC6A18 to the cell membrane and its amino acid transporter activity. Interacts with SLC6A19; this interaction regulates the trafficking of SLC6A19 to the cell membrane and its amino acid transporter activity. Interacts with SLC6A20B. Glycosylated. Glycosylation is required for plasma membrane localization and for its cleavage by BACE2. In terms of processing, proteolytically processed in pancreatic beta cells by BACE2 leading to the generation and extracellular release of soluble CLTRN, and a corresponding cell-associated C-terminal fragment which is later cleaved by gamma-secretase. This shedding process inactivates CLTRN. Three cleavage sites have been identified for BACE2, two clustered sites after Phe-116 and Leu-118 and a more membrane proximal site at Phe-125; the preferred BACE2 cleavage site seems to be between Phe-125 and Leu-126, Phe-116 and Leu-118 act as alternative sites. Expressed on the apical surface of the proximal tubules in the renal cortex (at protein level). Kidney; collecting ducts and proximal tubule. Pancreas; beta cells of islets. Expressed in the cerebral cortex, hippocampus, brainstem and cerebellum.

The protein resides in the cell membrane. Functionally, plays an important role in amino acid transport by acting as binding partner of amino acid transporters SLC6A18 and SLC6A19, regulating their trafficking on the cell surface and their activity. May also play a role in trafficking of amino acid transporters SLC3A1 and SLC7A9 to the renal cortical cell membrane. Regulator of SNARE complex function. Stimulator of beta cell replication. This chain is Collectrin, found in Mus musculus (Mouse).